We begin with the raw amino-acid sequence, 1127 residues long: MIAVSFKCRCQILRRLTKDESPYTKSASQTKPPDGALAVRRQSIPEEFKGSTVVELMKKEGTTLGLTVSGGIDKDGKPRVSNLRQGGIAARSDQLDVGDYIKAVNGINLAKFRHDEIISLLKNVGERVVLEVEYELPPVSVQGSSVMFRTVEVTLHKEGNTFGFVIRGGAHDDRNKSRPVVITCVRPGGPADREGTIKPGDRLLSVDGIRLLGTTHAEAMSILKQCGQEATLLIEYDVSVMDSVATASGPLLVEVAKTPGASLGVALTTSVCCNKQVIVIDKIKSASIADRCGALHVGDHILSIDGTSMEYCTLAEATQFLANTTDQVKLEILPHHQTRLALKGPDHVKIQRSDRQHPWDAWASNQCGVHTNHHHNTYHPDHCRVPALTFPKALPPNSPPAMVPSSSPTSMSAYSLSSLNMGTLPRSLYSTSPRGTMMRRRLKKKDFKSSLSLASSTVGLAGQVVHTETTEVVLTADPVTGFGIQLQGSVFATETLSSPPLISYIEADSPAERCGVLQIGDRVMAINGIPTEDSTFEEANQLLRDSSITSKVTLEIEFDVAESVIPSSGTFHVKLPKKHSVELGITISSPSSRKPGDPLVISDIKKGSVAHRTGTLELGDKLLAIDNIRLDNCSMEDAVQILQQCEDLVKLKIRKDEDNSDEQESSGAIIYTVELKRYGGPLGITISGTEEPFDPIIISSLTKGGLAERTGAIHIGDRILAINSSSLKGKPLSEAIHLLQMAGETVTLKIKKQTDAQSASSPKKFPIPGHSGDLGDGEEDPSPIQKPGKLSDAYPSTVPSVDSAVDSWDGSGIDASYGSQGSTFQTSGYNYNTYDWRSPKQRTSLSPVPKPRSQTYPDVGLSNEDWDRSTASGFVGASDSADAEQEENFWSQALEDLETCGQSGILRELEEKADRRVSLRNMTLLATIMSGSTMSLNHEAPMARSQLGRQASFQERSSSRPHYSQTTRSNTLPSDVGRKSVTLRKMKQEIKEIMSPTPVELHKVTLYKDSGMEDFGFSVADGLLEKGVYVKNIRPAGPGDVGGLKPYDRLLQVNHVRTRDFDCCLVVPLIAESGNKLDLVISRNPLASQKSIEQPALPSDWSEQNSAFFQQPSHGGNLETREPTNTL.

Gln11 carries the S-palmitoyl cysteine lipid modification. Residue Ser43 is modified to Phosphoserine. 6 PDZ domains span residues 53–136 (VVEL…EYEL), 150–238 (TVEV…EYDV), 252–336 (LVEV…LPHH), 471–560 (EVVL…EFDV), 572–657 (HVKL…RKDE), and 672–754 (TVEL…KKQT). Disordered stretches follow at residues 752 to 802 (KQTD…PSVD), 840 to 865 (KQRT…SNED), and 942 to 980 (MARS…GRKS). Polar residues-rich tracts occupy residues 840-856 (KQRT…SQTY) and 947-973 (LGRQ…NTLP). The PDZ 7 domain maps to 1003–1085 (KVTLYKDSGM…KLDLVISRNP (83 aa)). Positions 1108–1127 (FFQQPSHGGNLETREPTNTL) are disordered.

As to quaternary structure, interacts with EFNB3, GRIA2, GRIA3, GRIPAP1/GRASP1, PPFIA1, PPFIA4, FRAS1, PTPRF, liprins-alpha and the C-terminal tail of PRLHR. Can form homomultimers or heteromultimers with GRIP2. Interacts with EFNB1, EPHA7, EPHB2, KIF5A, KIF5B and KIF5C. Forms a ternary complex with GRIA2 and CSPG4. Interacts with ATAD1 in an ATP-dependent manner. ATAD1-catalyzed ATP hydrolysis disrupts binding to ATAD1 and to GRIA2 and leads to AMPAR complex disassembly. Interacts with SLC30A9 and PLCD4. Interacts with BUD23. Forms a complex with NSG1, GRIA2 and STX12; controls the intracellular fate of AMPAR and the endosomal sorting of the GRIA2 subunit toward recycling and membrane targeting. Interacts with NSG1. In terms of processing, palmitoylation of isoform 2. As to expression, expressed in brain. Isoform 2 is the major isoform in brain. Expressed in oligodendrocyte lineage cells.

It localises to the membrane. The protein localises to the cytoplasmic vesicle. It is found in the perikaryon. The protein resides in the cell projection. Its subcellular location is the dendrite. It localises to the cytoplasm. The protein localises to the endomembrane system. It is found in the postsynaptic cell membrane. The protein resides in the postsynaptic density. Its subcellular location is the endoplasmic reticulum membrane. Its function is as follows. May play a role as a localized scaffold for the assembly of a multiprotein signaling complex and as mediator of the trafficking of its binding partners at specific subcellular location in neurons. Through complex formation with NSG1, GRIA2 and STX12 controls the intracellular fate of AMPAR and the endosomal sorting of the GRIA2 subunit toward recycling and membrane targeting. This chain is Glutamate receptor-interacting protein 1 (Grip1), found in Mus musculus (Mouse).